Here is a 132-residue protein sequence, read N- to C-terminus: NADH-quinone oxidoreductase subunit I 1 (132 aa).

4Fe-4S ferredoxin-type domains follow at residues 42 to 71 (LKVS…VEAG) and 81 to 110 (ERYE…MTGQ). Cys51, Cys54, Cys57, Cys61, Cys90, Cys93, Cys96, and Cys100 together coordinate [4Fe-4S] cluster.

It belongs to the complex I 23 kDa subunit family. NDH-1 is composed of 14 different subunits. Subunits NuoA, H, J, K, L, M, N constitute the membrane sector of the complex. It depends on [4Fe-4S] cluster as a cofactor.

Its subcellular location is the cell inner membrane. The enzyme catalyses a quinone + NADH + 5 H(+)(in) = a quinol + NAD(+) + 4 H(+)(out). Functionally, NDH-1 shuttles electrons from NADH, via FMN and iron-sulfur (Fe-S) centers, to quinones in the respiratory chain. The immediate electron acceptor for the enzyme in this species is believed to be ubiquinone. Couples the redox reaction to proton translocation (for every two electrons transferred, four hydrogen ions are translocated across the cytoplasmic membrane), and thus conserves the redox energy in a proton gradient. The protein is NADH-quinone oxidoreductase subunit I 1 of Geobacter sulfurreducens (strain ATCC 51573 / DSM 12127 / PCA).